A 229-amino-acid polypeptide reads, in one-letter code: Small ribosomal subunit protein uS5 (229 aa).

The S5 DRBM domain maps to 61-124 (LEEQVLDVKL…AHAKLSLIKV (64 aa)).

The protein belongs to the universal ribosomal protein uS5 family. As to quaternary structure, part of the 30S ribosomal subunit. Contacts protein S4.

In terms of biological role, with S4 and S12 plays an important role in translational accuracy. The polypeptide is Small ribosomal subunit protein uS5 (Methanococcus maripaludis (strain C7 / ATCC BAA-1331)).